A 398-amino-acid chain; its full sequence is DNA replication and repair protein RecF (398 aa).

30-37 (GRNGFGKT) is an ATP binding site.

Belongs to the RecF family.

The protein localises to the cytoplasm. Functionally, the RecF protein is involved in DNA metabolism; it is required for DNA replication and normal SOS inducibility. RecF binds preferentially to single-stranded, linear DNA. It also seems to bind ATP. The chain is DNA replication and repair protein RecF from Corynebacterium efficiens (strain DSM 44549 / YS-314 / AJ 12310 / JCM 11189 / NBRC 100395).